Reading from the N-terminus, the 78-residue chain is MSSVCQVTGASPGFGYAVSHSHRRTKRRFDPNVRRRTFYVATLGRRVTLNVSVKGLRLIDKRGIDAVVRDLIKKGVKL.

It belongs to the bacterial ribosomal protein bL28 family.

The sequence is that of Large ribosomal subunit protein bL28 from Tropheryma whipplei (strain TW08/27) (Whipple's bacillus).